Here is a 446-residue protein sequence, read N- to C-terminus: 5-hydroxytryptamine receptor 7 (446 aa).

At 1 to 84 (MMGVNSSGRP…INYGRAEKVV (84 aa)) the chain is on the extracellular side. Asparagine 5 and asparagine 67 each carry an N-linked (GlcNAc...) asparagine glycan. A helical membrane pass occupies residues 85–109 (IGSILTLITLLTIAGNCLVVISVCF). At 110–119 (VKKLRQPSNY) the chain is on the cytoplasmic side. A helical membrane pass occupies residues 120–141 (LIVSLALADLSVAVAVIPFVSV). Topologically, residues 142–153 (TDLIGGKWIFGH) are extracellular. Residues 154–179 (FFCNVFIAMDVMCCTASIMTLCVISI) traverse the membrane as a helical segment. Cysteine 156 and cysteine 232 are disulfide-bonded. Aspartate 163 contacts serotonin. Over 180–199 (DRYLGITRPLTYPVRQNGKC) the chain is Cytoplasmic. A helical transmembrane segment spans residues 200-220 (MPKMILSVWLLSASITLPPLF). Residues 221-238 (GWAQNVNDDKVCLISQDF) are Extracellular-facing. A helical membrane pass occupies residues 239–261 (GYTIYSTAVAFYIPMSVMLFMYY). The Cytoplasmic segment spans residues 262–327 (RIYKAARKSA…SIFKREQKAA (66 aa)). Residues 328-353 (TTLGIIVGAFTVCWLPFFLLSTARPF) traverse the membrane as a helical segment. Residues 354 to 364 (ICGTACSCIPL) lie on the Extracellular side of the membrane. The helical transmembrane segment at 365-388 (WVERTCLWLGYANSLINPFIYAFF) threads the bilayer. Residues 389-446 (NRDLRTTYRSLLQCQYRNINRKLSAAGMHEALKLAERPERPECVLQNSDYCRKKGHDS) are Cytoplasmic-facing. Cysteine 402 carries the S-palmitoyl cysteine lipid modification.

This sequence belongs to the G-protein coupled receptor 1 family.

It is found in the cell membrane. In terms of biological role, G-protein coupled receptor for 5-hydroxytryptamine (serotonin), a biogenic hormone that functions as a neurotransmitter, a hormone and a mitogen. Ligand binding causes a conformation change that triggers signaling via guanine nucleotide-binding proteins (G proteins) and modulates the activity of downstream effectors. HTR7 is coupled to G(s) G alpha proteins and mediates activation of adenylate cyclase activity. The polypeptide is 5-hydroxytryptamine receptor 7 (HTR7) (Cavia porcellus (Guinea pig)).